A 169-amino-acid polypeptide reads, in one-letter code: 6,7-dimethyl-8-ribityllumazine synthase (169 aa).

Residues Y30, 61–63, and 90–92 each bind 5-amino-6-(D-ribitylamino)uracil; these read ALE and CVI. 95 to 96 contributes to the (2S)-2-hydroxy-3-oxobutyl phosphate binding site; it reads ET. H98 functions as the Proton donor in the catalytic mechanism. N123 is a 5-amino-6-(D-ribitylamino)uracil binding site. A (2S)-2-hydroxy-3-oxobutyl phosphate-binding site is contributed by R137.

It belongs to the DMRL synthase family.

It carries out the reaction (2S)-2-hydroxy-3-oxobutyl phosphate + 5-amino-6-(D-ribitylamino)uracil = 6,7-dimethyl-8-(1-D-ribityl)lumazine + phosphate + 2 H2O + H(+). It participates in cofactor biosynthesis; riboflavin biosynthesis; riboflavin from 2-hydroxy-3-oxobutyl phosphate and 5-amino-6-(D-ribitylamino)uracil: step 1/2. Functionally, catalyzes the formation of 6,7-dimethyl-8-ribityllumazine by condensation of 5-amino-6-(D-ribitylamino)uracil with 3,4-dihydroxy-2-butanone 4-phosphate. This is the penultimate step in the biosynthesis of riboflavin. In Methylorubrum populi (strain ATCC BAA-705 / NCIMB 13946 / BJ001) (Methylobacterium populi), this protein is 6,7-dimethyl-8-ribityllumazine synthase.